We begin with the raw amino-acid sequence, 367 residues long: MKASPHRPTKALIHLGAIRQNIQQMGAHIPQGTLKLAVVKANAYGHGAVAVAKAIQDDVDGFCVSNIDEAIELRQAGLSKPILILGVSEIEAVALAKEYDFTLTVAGLEWIQALLDKEVDLTGLTVHLKIDSGMGRIGFREASEVEQAQDLLQQHGVCVEGIFTHFATADEESDDYFNAQLERFKTILASMKEVPELVHASNSATTLWHVETIFNAVRMGDAMYGLNPSGAVLDLPYDLIPALTLESALVHVKTVPAGACMGYGATYQADSEQVIATVPIGYADGWTRDMQNFSVLVDGQACPIVGRVSMDQITIRLPKLYPLGTKVTLIGSNGDKEITATQVATYRVTINYEVVCLLSDRIPREYY.

The Proton acceptor; specific for D-alanine role is filled by K40. K40 bears the N6-(pyridoxal phosphate)lysine mark. R136 contributes to the substrate binding site. Y263 functions as the Proton acceptor; specific for L-alanine in the catalytic mechanism. Position 310 (M310) interacts with substrate.

This sequence belongs to the alanine racemase family. Pyridoxal 5'-phosphate serves as cofactor.

The catalysed reaction is L-alanine = D-alanine. It participates in amino-acid biosynthesis; D-alanine biosynthesis; D-alanine from L-alanine: step 1/1. In terms of biological role, catalyzes the interconversion of L-alanine and D-alanine. May also act on other amino acids. This chain is Alanine racemase (alr), found in Streptococcus pneumoniae (strain ATCC 700669 / Spain 23F-1).